The sequence spans 514 residues: Ubiquitin carboxyl-terminal hydrolase 22 (514 aa).

The UBP-type zinc-finger motif lies at 10-127 (PGCAHLGSFK…KEEQRKAWKM (118 aa)). 12 residues coordinate Zn(2+): Cys12, His14, Cys52, Cys55, Cys65, Cys68, Cys73, His78, His82, His88, Cys101, and Cys104. An N6-acetyllysine modification is found at Lys118. Thr136 bears the Phosphothreonine mark. Residues 165–509 (RGLINLGNTC…EGYLLFYHKQ (345 aa)) form the USP domain. Residue Cys174 is the Nucleophile of the active site. Ser226 carries the post-translational modification Phosphoserine. The Proton acceptor role is filled by His468.

Belongs to the peptidase C19 family. UBP8 subfamily. As to quaternary structure, component of some SAGA transcription coactivator-HAT complexes, at least composed of ATXN7, ATXN7L3, ENY2, GCN5L2, SUPT3H, TAF10, TRRAP and USP22. Within the SAGA complex, ATXN7L3, ENY2 and USP22 form a subcomplex required for histone deubiquitination. Interacts directly with ATXN7L3; leading to its recruitment to the SAGA complex. Interacts with ATXN7L3 and weakly with ATXN7L3B. Interacts with MED1. Post-translationally, phosphorylated in G2/M phase, but not in G1 phase by CDK1. Ubiquitinated and subsequently degraded in a CDC20-dependent manner.

The protein resides in the nucleus. Its subcellular location is the cytoplasm. It catalyses the reaction Thiol-dependent hydrolysis of ester, thioester, amide, peptide and isopeptide bonds formed by the C-terminal Gly of ubiquitin (a 76-residue protein attached to proteins as an intracellular targeting signal).. In terms of biological role, deubiquitinase that plays a role in several cellular processes including transcriptional regulation, cell cycle progression or innate immunity. As part of the transcription regulatory histone acetylation (HAT) complex SAGA, catalyzes the deubiquitination of both histones H2A and H2B, thereby acting as a transcriptional coactivator. Recruited to specific gene promoters by activators such as MYC, where it is required for transcription. Facilitates cell-cycle progression by stabilizing CCNB1 and antagonizing its proteasome-mediated degradation in a cell cycle-specific manner. Modulates cell cycle progression and apoptosis also by antagonizing TP53 transcriptional activation through deacetylase SIRT1 stabilization. Plays multiple roles in immunity and inflammation. Participates in antiviral response by deubiquitinating the importin KPNA2, leading to IRF3 nuclear translocation and subsequent type I interferon production. Acts as a central regulator of type III IFN signaling by negatively regulating STING1 activation and ubiquitination. Inhibits NLRP3 inflammasome activation by promoting NLRP3 degradation through ATG5-dependent autophagy. Deubiquitinates CD274 to induce its stabilization and thereby participates in maintenance of immune tolerance to self. Controls necroptotic cell death by regulating RIPK3 phosphorylation and ubiquitination. During bacterial infection, promotes pro-inflammatory response by targeting TRAF6 and removing its 'Lys-48'-linked polyubiquitination. The protein is Ubiquitin carboxyl-terminal hydrolase 22 (USP22) of Bos taurus (Bovine).